A 165-amino-acid polypeptide reads, in one-letter code: 3-isopropylmalate dehydratase small subunit (165 aa).

It belongs to the LeuD family. LeuD type 2 subfamily. Heterodimer of LeuC and LeuD.

It carries out the reaction (2R,3S)-3-isopropylmalate = (2S)-2-isopropylmalate. It functions in the pathway amino-acid biosynthesis; L-leucine biosynthesis; L-leucine from 3-methyl-2-oxobutanoate: step 2/4. Catalyzes the isomerization between 2-isopropylmalate and 3-isopropylmalate, via the formation of 2-isopropylmaleate. This Saccharolobus islandicus (strain Y.N.15.51 / Yellowstone #2) (Sulfolobus islandicus) protein is 3-isopropylmalate dehydratase small subunit.